We begin with the raw amino-acid sequence, 438 residues long: Trigger factor (438 aa).

A PPIase FKBP-type domain is found at 162–247; sequence GDIVTIDFEG…VKDIKVKELP (86 aa).

This sequence belongs to the FKBP-type PPIase family. Tig subfamily.

It localises to the cytoplasm. The catalysed reaction is [protein]-peptidylproline (omega=180) = [protein]-peptidylproline (omega=0). Its function is as follows. Involved in protein export. Acts as a chaperone by maintaining the newly synthesized protein in an open conformation. Functions as a peptidyl-prolyl cis-trans isomerase. In Caldicellulosiruptor bescii (strain ATCC BAA-1888 / DSM 6725 / KCTC 15123 / Z-1320) (Anaerocellum thermophilum), this protein is Trigger factor.